The chain runs to 306 residues: 3-methyl-2-oxobutanoate hydroxymethyltransferase (306 aa).

2 residues coordinate Mg(2+): aspartate 53 and aspartate 96. Residues 53–54 (DS), aspartate 96, and lysine 126 each bind 3-methyl-2-oxobutanoate. Glutamate 128 lines the Mg(2+) pocket. Residue glutamate 195 is the Proton acceptor of the active site.

The protein belongs to the PanB family. Homodecamer; pentamer of dimers. Mg(2+) is required as a cofactor.

The protein resides in the cytoplasm. It catalyses the reaction 3-methyl-2-oxobutanoate + (6R)-5,10-methylene-5,6,7,8-tetrahydrofolate + H2O = 2-dehydropantoate + (6S)-5,6,7,8-tetrahydrofolate. The protein operates within cofactor biosynthesis; (R)-pantothenate biosynthesis; (R)-pantoate from 3-methyl-2-oxobutanoate: step 1/2. Catalyzes the reversible reaction in which hydroxymethyl group from 5,10-methylenetetrahydrofolate is transferred onto alpha-ketoisovalerate to form ketopantoate. This is 3-methyl-2-oxobutanoate hydroxymethyltransferase from Anaeromyxobacter sp. (strain K).